The primary structure comprises 393 residues: Formate-dependent phosphoribosylglycinamide formyltransferase (393 aa).

N(1)-(5-phospho-beta-D-ribosyl)glycinamide-binding positions include 22-23 (EL) and E82. ATP is bound by residues R114, K155, 160-165 (SSGKGQ), 195-198 (EGLV), and E203. Positions 119-308 (RLAAETLQLP…EFALHVRAFL (190 aa)) constitute an ATP-grasp domain. E267 and E279 together coordinate Mg(2+). Residues D286, K355, and 362–363 (RR) contribute to the N(1)-(5-phospho-beta-D-ribosyl)glycinamide site.

It belongs to the PurK/PurT family. In terms of assembly, homodimer.

It carries out the reaction N(1)-(5-phospho-beta-D-ribosyl)glycinamide + formate + ATP = N(2)-formyl-N(1)-(5-phospho-beta-D-ribosyl)glycinamide + ADP + phosphate + H(+). It functions in the pathway purine metabolism; IMP biosynthesis via de novo pathway; N(2)-formyl-N(1)-(5-phospho-D-ribosyl)glycinamide from N(1)-(5-phospho-D-ribosyl)glycinamide (formate route): step 1/1. Its function is as follows. Involved in the de novo purine biosynthesis. Catalyzes the transfer of formate to 5-phospho-ribosyl-glycinamide (GAR), producing 5-phospho-ribosyl-N-formylglycinamide (FGAR). Formate is provided by PurU via hydrolysis of 10-formyl-tetrahydrofolate. In Yersinia pseudotuberculosis serotype IB (strain PB1/+), this protein is Formate-dependent phosphoribosylglycinamide formyltransferase.